The sequence spans 334 residues: tRNA dimethylallyltransferase (334 aa).

23-30 (GPTGAGKT) provides a ligand contact to ATP. 25 to 30 (TGAGKT) is a substrate binding site. Interaction with substrate tRNA regions lie at residues 53 to 56 (DSAL) and 177 to 181 (QRVQR).

It belongs to the IPP transferase family. Monomer. It depends on Mg(2+) as a cofactor.

The enzyme catalyses adenosine(37) in tRNA + dimethylallyl diphosphate = N(6)-dimethylallyladenosine(37) in tRNA + diphosphate. In terms of biological role, catalyzes the transfer of a dimethylallyl group onto the adenine at position 37 in tRNAs that read codons beginning with uridine, leading to the formation of N6-(dimethylallyl)adenosine (i(6)A). This Polynucleobacter necessarius subsp. necessarius (strain STIR1) protein is tRNA dimethylallyltransferase.